The sequence spans 159 residues: SsrA-binding protein (159 aa).

Belongs to the SmpB family.

Its subcellular location is the cytoplasm. Its function is as follows. Required for rescue of stalled ribosomes mediated by trans-translation. Binds to transfer-messenger RNA (tmRNA), required for stable association of tmRNA with ribosomes. tmRNA and SmpB together mimic tRNA shape, replacing the anticodon stem-loop with SmpB. tmRNA is encoded by the ssrA gene; the 2 termini fold to resemble tRNA(Ala) and it encodes a 'tag peptide', a short internal open reading frame. During trans-translation Ala-aminoacylated tmRNA acts like a tRNA, entering the A-site of stalled ribosomes, displacing the stalled mRNA. The ribosome then switches to translate the ORF on the tmRNA; the nascent peptide is terminated with the 'tag peptide' encoded by the tmRNA and targeted for degradation. The ribosome is freed to recommence translation, which seems to be the essential function of trans-translation. The protein is SsrA-binding protein of Salinispora tropica (strain ATCC BAA-916 / DSM 44818 / JCM 13857 / NBRC 105044 / CNB-440).